Consider the following 616-residue polypeptide: Probable Xaa-Pro aminopeptidase P (616 aa).

Residues Asp413, Asp424, Glu522, and Glu536 each contribute to the Mn(2+) site.

Belongs to the peptidase M24B family. The cofactor is Mn(2+).

The enzyme catalyses Release of any N-terminal amino acid, including proline, that is linked to proline, even from a dipeptide or tripeptide.. In terms of biological role, catalyzes the removal of a penultimate prolyl residue from the N-termini of peptides. In Paracoccidioides brasiliensis (strain Pb03), this protein is Probable Xaa-Pro aminopeptidase P (AMPP).